Reading from the N-terminus, the 392-residue chain is Nucleosome assembly protein 1-like 1-A (392 aa).

The segment at 1–37 (MANIDNKGQTELDQQDMEDVEDVEEEETGEDANSKAR) is disordered. Residues 13–30 (DQQDMEDVEDVEEEETGE) show a composition bias toward acidic residues. The NAP1L motif motif lies at 126-150 (YEPTEEECEWKVEEEDISGDLKEKA). Residues 273–279 (IKKKQKH) carry the Nuclear localization signal motif. Positions 346–377 (AIEDDDDDYDEEGEEADDEEGEEEADEDNDPD) are enriched in acidic residues. Residues 346 to 392 (AIEDDDDDYDEEGEEADDEEGEEEADEDNDPDYEPKKGQNPAECKQQ) are disordered.

This sequence belongs to the nucleosome assembly protein (NAP) family. As to quaternary structure, forms homomultimers. Interacts with histone B4. Interacts with the B-type cyclins ccnb1 and ccnb2. Phosphorylated by cyclin B-cdc2 kinase complexes. In terms of tissue distribution, initially expressed throughout the embryo with expression higher at the animal pole. Becomes localized to presumptive ectoderm by gastrula stages. By stage 18 (neurula), expressed in the neural plate and posterior to the cement gland. In late neurula/early tailbud stages, expressed in the neural crest, neural tube, eyes, tailbud and ventral blood islands. Adult expression is predominantly in ovaries.

It localises to the cytoplasm. It is found in the nucleus. In terms of biological role, acts as a chaperone for the linker histone to facilitate deposition of histone B4 onto linker DNA. Required for both remodeling of sperm chromatin into nucleosomes, and linker histone binding to nucleosome core dimers. Plays a role in tissue-specific gene regulation. Required for primitive hemopoiesis, acting upstream of tal1/scl. The polypeptide is Nucleosome assembly protein 1-like 1-A (nap1l1-a) (Xenopus laevis (African clawed frog)).